Consider the following 310-residue polypeptide: Glutaminase (310 aa).

The substrate site is built by S67, N118, E161, N168, Y192, Y244, and V262.

The protein belongs to the glutaminase family. In terms of assembly, homotetramer.

The catalysed reaction is L-glutamine + H2O = L-glutamate + NH4(+). This chain is Glutaminase, found in Legionella pneumophila (strain Corby).